Here is a 981-residue protein sequence, read N- to C-terminus: Colossin-C (981 aa).

Positions M1–S23 are cleaved as a signal peptide. N-linked (GlcNAc...) asparagine glycosylation is present at N63. Positions E172 to T195 are disordered. Over residues P177–F194 the composition is skewed to pro residues. N-linked (GlcNAc...) asparagine glycosylation is found at N222, N591, and N811.

It belongs to the serine-aspartate repeat-containing protein (SDr) family.

It is found in the secreted. In Dictyostelium discoideum (Social amoeba), this protein is Colossin-C (colC).